We begin with the raw amino-acid sequence, 244 residues long: Octanoyltransferase (244 aa).

The tract at residues 1-21 (MDKKLHSVSPESGPNSNLDLT) is disordered. The segment covering 9–21 (SPESGPNSNLDLT) has biased composition (polar residues). The region spanning 59-244 (PFSPQAVWLL…LNWEKINQSL (186 aa)) is the BPL/LPL catalytic domain. Residues 101 to 108 (RGGEVTHH), 168 to 170 (SIG), and 181 to 183 (GFS) each bind substrate. Catalysis depends on Cys-199, which acts as the Acyl-thioester intermediate.

It belongs to the LipB family.

It is found in the cytoplasm. It carries out the reaction octanoyl-[ACP] + L-lysyl-[protein] = N(6)-octanoyl-L-lysyl-[protein] + holo-[ACP] + H(+). The protein operates within protein modification; protein lipoylation via endogenous pathway; protein N(6)-(lipoyl)lysine from octanoyl-[acyl-carrier-protein]: step 1/2. Its function is as follows. Catalyzes the transfer of endogenously produced octanoic acid from octanoyl-acyl-carrier-protein onto the lipoyl domains of lipoate-dependent enzymes. Lipoyl-ACP can also act as a substrate although octanoyl-ACP is likely to be the physiological substrate. This is Octanoyltransferase from Prochlorococcus marinus (strain NATL1A).